A 96-amino-acid polypeptide reads, in one-letter code: MKIRPLHDRVVVRRLEEERTTAGWIVIPDSATEKPMRGEIIAIGAGKILDNGDVRAFVVKVGDVVLFGKYSGTEVKVAGQELVVMREDDIMGVIEK.

The protein belongs to the GroES chaperonin family. Heptamer of 7 subunits arranged in a ring. Interacts with the chaperonin GroEL.

The protein localises to the cytoplasm. In terms of biological role, together with the chaperonin GroEL, plays an essential role in assisting protein folding. The GroEL-GroES system forms a nano-cage that allows encapsulation of the non-native substrate proteins and provides a physical environment optimized to promote and accelerate protein folding. GroES binds to the apical surface of the GroEL ring, thereby capping the opening of the GroEL channel. This is Co-chaperonin GroES from Legionella jeonii.